Here is a 366-residue protein sequence, read N- to C-terminus: Flagellar P-ring protein (366 aa).

Positions 1-20 (MVIKFLSALILLLVTTAAQA) are cleaved as a signal peptide.

The protein belongs to the FlgI family. As to quaternary structure, the basal body constitutes a major portion of the flagellar organelle and consists of four rings (L,P,S, and M) mounted on a central rod.

The protein resides in the periplasm. It is found in the bacterial flagellum basal body. Its function is as follows. Assembles around the rod to form the L-ring and probably protects the motor/basal body from shearing forces during rotation. This Escherichia coli O1:K1 / APEC protein is Flagellar P-ring protein.